A 409-amino-acid chain; its full sequence is DNA double-strand break repair protein Mre11 (409 aa).

Residues Asp9, His11, Asp50, and Glu85 each coordinate Mn(2+). His86 (proton donor) is an active-site residue. 3 residues coordinate Mn(2+): His170, His199, and His201.

It belongs to the MRE11/RAD32 family. In terms of assembly, homodimer. Forms a heterotetramer composed of two Mre11 subunits and two Rad50 subunits. Mn(2+) is required as a cofactor.

With respect to regulation, nuclease activity is regulated by Rad50. Functionally, part of the Rad50/Mre11 complex, which is involved in the early steps of DNA double-strand break (DSB) repair. The complex may facilitate opening of the processed DNA ends to aid in the recruitment of HerA and NurA. Mre11 binds to DSB ends and has both double-stranded 3'-5' exonuclease activity and single-stranded endonuclease activity. The chain is DNA double-strand break repair protein Mre11 from Aeropyrum pernix (strain ATCC 700893 / DSM 11879 / JCM 9820 / NBRC 100138 / K1).